A 164-amino-acid polypeptide reads, in one-letter code: Anthrone oxygenase AgnL2 (164 aa).

Helical transmembrane passes span 11-31 (VVTG…AVPV), 48-70 (RMYH…LYAY), and 85-105 (VFAL…LCMV).

It belongs to the anthrone oxygenase family.

It localises to the membrane. The catalysed reaction is emodin anthrone + O2 = emodin + H2O + H(+). The protein operates within secondary metabolite biosynthesis. Its function is as follows. Anthrone oxygenase; part of the gene cluster that mediates the biosynthesis of agnestins, dihydroxy-xanthone metabolites. The pathway begins with the assembly and cyclization of atrochrysone thioester by the non-reducing polyketide synthase Agnpks1. The atrochrysone carboxyl ACP thioesterase AgnL7 then breaks the thioester bond and releases the atrochrysone carboxylic acid as the first enzyme-free intermediate. The decarboxylase AgnL1 then catalyzes the concerted decarboxylation-elimination required to convert atochrysone carboxylic acid into emodin anthrone, which is further oxidized to emodin by the anthrone oxygenase AgnL2. Emodin then undergoes reduction catalyzed by the oxidoreductase AgnL4 to yield the dihydroquinone tautomer which is the substrate for reduction by the short chain dehydrogenase AgnL6 reduction to produce hydroxyketone, followed by AgnL8 dehydration and likely spontaneous autoxidation to chrysophanol. Baeyer-Villiger oxidation by the oxidase AgnL3 leads to monodictyphenone via cleavage of the C-10/C-10a bond of chrysophanol. Alternative cleavage at the C-4a/C-10 bond of chrysophanol also leads to the formation some cephalone F. Further conversion to agnestins A and B, requires reduction to dihydro-monodictyphenone, oxidation to agnestin C probably via an epoxide, and rearrangement to either agnestin A or agnestin B directly, although agnestin A or agnestin B can also interconvert. Within the cluster, AgnR1 is the only unassigned oxidoreductase present which could be involved in this conversion. However, AgnR1 seems not to be involved in this step, and thus genes involved in the proposed oxidation/reduction may be located elsewhere on the genome. Further agnestin A derivatives are probably formed by spontaneous decarboxylations, dehydrations and methanolysis reactions. In Paecilomyces divaricatus (Penicillium divaricatum), this protein is Anthrone oxygenase AgnL2.